Here is a 66-residue protein sequence, read N- to C-terminus: Large ribosomal subunit protein bL35 (66 aa).

It belongs to the bacterial ribosomal protein bL35 family.

This chain is Large ribosomal subunit protein bL35, found in Borreliella afzelii (strain PKo) (Borrelia afzelii).